Reading from the N-terminus, the 179-residue chain is NADH-quinone oxidoreductase subunit B (179 aa).

[4Fe-4S] cluster contacts are provided by cysteine 52, cysteine 53, cysteine 117, and cysteine 147.

It belongs to the complex I 20 kDa subunit family. In terms of assembly, NDH-1 is composed of 14 different subunits. Subunits NuoB, C, D, E, F, and G constitute the peripheral sector of the complex. The cofactor is [4Fe-4S] cluster.

Its subcellular location is the cell inner membrane. It carries out the reaction a quinone + NADH + 5 H(+)(in) = a quinol + NAD(+) + 4 H(+)(out). In terms of biological role, NDH-1 shuttles electrons from NADH, via FMN and iron-sulfur (Fe-S) centers, to quinones in the respiratory chain. The immediate electron acceptor for the enzyme in this species is believed to be ubiquinone. Couples the redox reaction to proton translocation (for every two electrons transferred, four hydrogen ions are translocated across the cytoplasmic membrane), and thus conserves the redox energy in a proton gradient. The polypeptide is NADH-quinone oxidoreductase subunit B (Ehrlichia chaffeensis (strain ATCC CRL-10679 / Arkansas)).